A 436-amino-acid chain; its full sequence is WD repeat domain phosphoinositide-interacting protein 2 (436 aa).

The WD 1 repeat unit spans residues 182–222 (AHDSPLAALAFDASGTKLATASEKGTVIRVFSIPEGQKLFE). The L/FRRG motif signature appears at 223 to 226 (FRRG). WD repeat units lie at residues 228 to 267 (KRCV…EKPQ) and 311 to 349 (GHKN…GGEC).

It belongs to the WD repeat PROPPIN family.

It is found in the preautophagosomal structure membrane. Functionally, component of the autophagy machinery that controls the major intracellular degradation process by which cytoplasmic materials are packaged into autophagosomes and delivered to lysosomes for degradation. Involved in an early step of the formation of preautophagosomal structures. The protein is WD repeat domain phosphoinositide-interacting protein 2 (WIPI2) of Gallus gallus (Chicken).